The sequence spans 493 residues: Keratin, type II cuticular Hb3 (493 aa).

A head region spans residues 1–111 (MTCGFNSIGC…PNAQCVKQEE (111 aa)). One can recognise an IF rod domain in the interval 111–422 (EKEQIKSLNS…RLLEGEEQRL (312 aa)). The tract at residues 112–146 (KEQIKSLNSRFAAFIDKVRFLEQQNKLLETKLQFY) is coil 1A. Residues 147 to 156 (QNRECCQSNL) form a linker 1 region. The coil 1B stretch occupies residues 157–257 (EPLFAGYIET…YEEEIRILQS (101 aa)). A Glycyl lysine isopeptide (Lys-Gly) (interchain with G-Cter in SUMO1) cross-link involves residue lysine 217. The linker 12 stretch occupies residues 258–274 (HISDTSVVVKLDNSRDL). Residues 275-418 (NMDCIVAEIK…ATYRRLLEGE (144 aa)) are coil 2. The segment at 419-493 (EQRLCEGVEA…GGGSCGQGRH (75 aa)) is tail.

The protein belongs to the intermediate filament family. In terms of assembly, heterotetramer of two type I and two type II keratins. As to expression, synthesis begins in the cortex 10-15 cell layers above the apex of the dermal papilla and ends abruptly in the middle of the cortex.

The polypeptide is Keratin, type II cuticular Hb3 (KRT83) (Homo sapiens (Human)).